Consider the following 156-residue polypeptide: Baculoviral IAP repeat-containing protein 5.2 (156 aa).

Residues 30–100 form a BIR repeat; it reads RLSTFANWPF…KHSPSCLFIA (71 aa). The residue at position 46 (Thr46) is a Phosphothreonine; by CDK1. 4 residues coordinate Zn(2+): Cys69, Cys72, His89, and Cys96.

Belongs to the IAP family. Component of the CPC at least composed of survivin/birc5, incenp, cdca8/borealin and/or cdca9/dasra-A, and aurkb/aurora-B. Interacts directly with incenp (via N-terminus). Interacts with rxra; the interaction is stronger in the absence of 9-cis retinoic acids. In terms of processing, ubiquitination is required for centrosome-targeting.

The protein localises to the cytoplasm. The protein resides in the nucleus. It is found in the chromosome. It localises to the centromere. Its subcellular location is the cytoskeleton. The protein localises to the spindle. Its function is as follows. Component of the chromosomal passenger complex (CPC), a complex that acts as a key regulator of mitosis. The CPC complex has essential functions at the centromere in ensuring correct chromosome alignment and segregation and is required for chromatin-induced microtubule stabilization and spindle assembly. Does not appear to exhibit anti-apoptotic activity. Plays a role in increasing blood vessel size during development. The sequence is that of Baculoviral IAP repeat-containing protein 5.2 (birc5.2) from Xenopus tropicalis (Western clawed frog).